The sequence spans 113 residues: Protein translation factor SUI1 homolog (113 aa).

This sequence belongs to the SUI1 family.

Its function is as follows. Probably involved in translation. This Spuriopimpinella brachycarpa (Chamnamul) protein is Protein translation factor SUI1 homolog.